A 217-amino-acid polypeptide reads, in one-letter code: Probable transaldolase (217 aa).

The Schiff-base intermediate with substrate role is filled by K83.

Belongs to the transaldolase family. Type 3B subfamily.

It is found in the cytoplasm. It carries out the reaction D-sedoheptulose 7-phosphate + D-glyceraldehyde 3-phosphate = D-erythrose 4-phosphate + beta-D-fructose 6-phosphate. It participates in carbohydrate degradation; pentose phosphate pathway; D-glyceraldehyde 3-phosphate and beta-D-fructose 6-phosphate from D-ribose 5-phosphate and D-xylulose 5-phosphate (non-oxidative stage): step 2/3. Transaldolase is important for the balance of metabolites in the pentose-phosphate pathway. This Methanocaldococcus jannaschii (strain ATCC 43067 / DSM 2661 / JAL-1 / JCM 10045 / NBRC 100440) (Methanococcus jannaschii) protein is Probable transaldolase (tal).